The chain runs to 131 residues: Holo-[acyl-carrier-protein] synthase (131 aa).

Positions 8 and 59 each coordinate Mg(2+).

The protein belongs to the P-Pant transferase superfamily. AcpS family. The cofactor is Mg(2+).

It localises to the cytoplasm. The enzyme catalyses apo-[ACP] + CoA = holo-[ACP] + adenosine 3',5'-bisphosphate + H(+). Its function is as follows. Transfers the 4'-phosphopantetheine moiety from coenzyme A to a Ser of acyl-carrier-protein. This is Holo-[acyl-carrier-protein] synthase from Rickettsia rickettsii (strain Sheila Smith).